Reading from the N-terminus, the 122-residue chain is Class I hydrophobin 2 (122 aa).

The first 22 residues, 1–22 (MFARVSTLFAMFFLGLALMVSA), serve as a signal peptide directing secretion. Disulfide bonds link Cys40–Cys101, Cys47–Cys95, Cys48–Cys81, and Cys102–Cys115.

Belongs to the fungal hydrophobin family. In terms of assembly, self-assembles to form functional amyloid fibrils called rodlets. Self-assembly into fibrillar rodlets occurs spontaneously at hydrophobic:hydrophilic interfaces and the rodlets further associate laterally to form amphipathic monolayers.

Its subcellular location is the secreted. It localises to the cell wall. Functionally, aerial growth, conidiation, and dispersal of filamentous fungi in the environment rely upon a capability of their secreting small amphipathic proteins called hydrophobins (HPBs) with low sequence identity. Class I can self-assemble into an outermost layer of rodlet bundles on aerial cell surfaces, conferring cellular hydrophobicity that supports fungal growth, development and dispersal; whereas Class II form highly ordered films at water-air interfaces through intermolecular interactions but contribute nothing to the rodlet structure. Hah2 is a class I hydrophobin that is involved in aerial growth of mycelia, but does not play a role in pathogenesis. This is Class I hydrophobin 2 from Heterobasidion annosum (Root rot fungus).